The chain runs to 1115 residues: Phytochrome E (1115 aa).

Positions 213–383 (DIGTLCDTVV…AFSLQLYMEL (171 aa)) constitute a GAF domain. C318 is a phytochromobilin binding site. In terms of domain architecture, PAS 1 spans 598–669 (MALELVRLVE…ALMCRALQGE (72 aa)). The 57-residue stretch at 672–728 (RNVEVKLLKFGNHPTKEVVYLVVNACTSRDYKNDIIGVCFVGQDITPEKAVMDKFVR) folds into the PAC domain. Residues 732-803 (DYEAIIQSLN…DALTKFMILL (72 aa)) enclose the PAS 2 domain. Positions 880 to 1100 (YIQQQMKNPL…YFLIDLDFKT (221 aa)) constitute a Histidine kinase domain.

This sequence belongs to the phytochrome family. As to quaternary structure, homodimer. Post-translationally, contains one covalently linked phytochromobilin chromophore.

Regulatory photoreceptor which exists in two forms that are reversibly interconvertible by light: the Pr form that absorbs maximally in the red region of the spectrum and the Pfr form that absorbs maximally in the far-red region. Photoconversion of Pr to Pfr induces an array of morphogenic responses, whereas reconversion of Pfr to Pr cancels the induction of those responses. Pfr controls the expression of a number of nuclear genes including those encoding the small subunit of ribulose-bisphosphate carboxylase, chlorophyll A/B binding protein, protochlorophyllide reductase, rRNA, etc. It also controls the expression of its own gene(s) in a negative feedback fashion. This Ipomoea nil (Japanese morning glory) protein is Phytochrome E (PHYE).